The following is a 459-amino-acid chain: MTFDYDLFVIGAGSGGLAASKRAASYGAKVAIAENDLVGGTCVIRGCVPKKLMVYGSHFPALFEDAAGYGWQVGKAELNWEHFITSIDKEVRRLSQLHISFLEKAGVELISGRATLVDNHTVEVGERKFTADKILIAVGGRPIKPELPGMEYGITSNEIFHLKTQPKHIAIIGSGYIGTEFAGIMRGLGSQVTQITRGDKILKGFDEDIRTEIQEGMTNHGIRIIPKNVVTAIEQVPEGLKISLSGEDQEPIIADVFLVATGRVPNVDGLGLENAGVDVVDSSIEGPGYSTMNAIAVNEYSQTSQPNIYAVGDVTDRLNLTPVAIGEGRAFADSEFGNNRREFSHETIATAVFSNPQASTVGLTEAEARAKLGDDAVTIYRTRFRPMYHSFTGKQERIMMKLVVDTKTDKVLGAHMVGENAAEIIQGVAIAVKMGATKKDFDATVGIHPSSAEEFVTMR.

Residues Ser14, Gly15, Glu34, Thr41, Cys42, Lys50, and Ala114 each contribute to the FAD site. Ser14 contacts glutathione. Cysteines 42 and 47 form a disulfide. NADP(+)-binding residues include Ile177, Glu180, Arg197, Lys203, and Gly262. 2 residues coordinate FAD: Asp313 and Thr321. Residue Arg329 participates in glutathione binding. An NADP(+)-binding site is contributed by Ala351. His448 serves as a coordination point for FAD. The active-site Proton acceptor is the His448.

It belongs to the class-I pyridine nucleotide-disulfide oxidoreductase family. Homodimer. It depends on FAD as a cofactor.

The protein localises to the cytoplasm. It carries out the reaction 2 glutathione + NADP(+) = glutathione disulfide + NADPH + H(+). Catalyzes the reduction of glutathione disulfide (GSSG) to reduced glutathione (GSH). Constitutes the major mechanism to maintain a high GSH:GSSG ratio in the cytosol. The polypeptide is Glutathione reductase (gor) (Nostoc sp. (strain PCC 7120 / SAG 25.82 / UTEX 2576)).